Consider the following 280-residue polypeptide: Pantothenate synthetase (280 aa).

31–38 (MGNLHVGH) serves as a coordination point for ATP. H38 functions as the Proton donor in the catalytic mechanism. Q62 is a binding site for (R)-pantoate. Q62 is a binding site for beta-alanine. 150–153 (GKKD) contacts ATP. A (R)-pantoate-binding site is contributed by Q156. ATP-binding positions include V179 and 187 to 190 (MSSR).

This sequence belongs to the pantothenate synthetase family. As to quaternary structure, homodimer.

It localises to the cytoplasm. It carries out the reaction (R)-pantoate + beta-alanine + ATP = (R)-pantothenate + AMP + diphosphate + H(+). It functions in the pathway cofactor biosynthesis; (R)-pantothenate biosynthesis; (R)-pantothenate from (R)-pantoate and beta-alanine: step 1/1. Its function is as follows. Catalyzes the condensation of pantoate with beta-alanine in an ATP-dependent reaction via a pantoyl-adenylate intermediate. This is Pantothenate synthetase from Xanthomonas oryzae pv. oryzae (strain KACC10331 / KXO85).